The sequence spans 418 residues: MAFIAALGILMAGICPTVLCFSDDTWGIDILLHKNQESGTPDDSLTLASINTDFAFSLYKKMALKNPDKNIVFSPLSISAALALVSLGAKGNTLEEILEGLKFNLTETSEADIHQGFGHLLQRLSQPEDQDQINIGNAMFIEKDLQILAEFHEKTRALYQTEAFTADFQQPTEATKLINDYVSNQTQGMIKKLISELDDRTLMVLVNYIYFKGKWKISFDPQDTFESEFYLDEKRSVKVPMMKMKFLTTRHFRDEELSCSVLELKYTGNASALFILPDQGRMQQVEASLQPETLRKWWKSLKTRKIGELYLPKFSISTDYNLKDILPELGIKEIFSKQADLSGITGTKDLSVSQVVHKAVLDVAETGTEAAAATGFIFGFRSRRLQTMTVQFNRPFLMVISHTGVQTTLFMAKVTNPK.

The signal sequence occupies residues Met-1–Cys-20. Residues Asn-104, Asn-184, and Asn-269 are each glycosylated (N-linked (GlcNAc...) asparagine). The interval Gly-367 to Phe-392 is RCL.

Belongs to the serpin family. In terms of tissue distribution, expressed in liver and testis.

The protein localises to the secreted. This chain is Serine protease inhibitor A3M (Serpina3m), found in Mus musculus (Mouse).